Reading from the N-terminus, the 151-residue chain is NADH dehydrogenase [ubiquinone] 1 beta subcomplex subunit 11, mitochondrial (151 aa).

Residues 1–29 (MAARLLSLYGRCLSAAGAMRGLPAARVRW) constitute a mitochondrion transit peptide. Residues 40–62 (GVEKKRQREPTMQWQEDPEPEDE) form a disordered region. The chain crosses the membrane as a helical span at residues 87-107 (AVFFFGFSIVLVFGTTFVAYV).

It belongs to the complex I NDUFB11 subunit family. In terms of assembly, complex I is composed of 45 different subunits. Interacts with BCAP31.

The protein resides in the mitochondrion inner membrane. Its function is as follows. Accessory subunit of the mitochondrial membrane respiratory chain NADH dehydrogenase (Complex I), that is believed not to be involved in catalysis. Complex I functions in the transfer of electrons from NADH to the respiratory chain. The immediate electron acceptor for the enzyme is believed to be ubiquinone. The sequence is that of NADH dehydrogenase [ubiquinone] 1 beta subcomplex subunit 11, mitochondrial (Ndufb11) from Mus musculus (Mouse).